The following is a 69-amino-acid chain: Cecropin-like peptide 1 (69 aa).

An N-terminal signal peptide occupies residues 1–23; sequence MNFTKLFVVFAVVLVAFAGQSEA. Glutamine 68 bears the Glutamine amide mark.

Following bacterial infection, expressed in fat body, trachea and muscle.

The protein resides in the secreted. Its function is as follows. Antimicrobial peptide active against Gram-negative bacteria E.coli KCCM 11234 (MIC&lt;=1.03 uM), E.aerogenes KCCM 12177 (MIC&lt;=2.07 uM) and P.aeruginosa KCCM 11328 (MIC&lt;=2.07 uM). Not active against various Gram-positive bacteria at concentrations up to 4.14 uM. This Hermetia illucens (Black soldier fly) protein is Cecropin-like peptide 1.